Here is a 265-residue protein sequence, read N- to C-terminus: Phosphonoacetaldehyde hydrolase (265 aa).

Asp-10 acts as the Nucleophile in catalysis. Mg(2+) is bound by residues Asp-10 and Ala-12. Catalysis depends on Lys-51, which acts as the Schiff-base intermediate with substrate. Asp-184 contacts Mg(2+).

The protein belongs to the HAD-like hydrolase superfamily. PhnX family. In terms of assembly, homodimer. Requires Mg(2+) as cofactor.

It catalyses the reaction phosphonoacetaldehyde + H2O = acetaldehyde + phosphate + H(+). Involved in phosphonate degradation. The polypeptide is Phosphonoacetaldehyde hydrolase (Latilactobacillus sakei subsp. sakei (strain 23K) (Lactobacillus sakei subsp. sakei)).